A 520-amino-acid polypeptide reads, in one-letter code: Endosomal/lysosomal proton channel TMEM175 (520 aa).

The interval 1-27 (MGENDESEIIEHHDDEEMEKRRPPRTH) is disordered. Over 1–49 (MGENDESEIIEHHDDEEMEKRRPPRTHAQSFLESVASSVKEGHSSTQSS) the chain is Cytoplasmic. Positions 9-21 (IIEHHDDEEMEKR) are enriched in basic and acidic residues. The helical transmembrane segment at 50-72 (HRLLAYSDALISIIATVMILPVA) threads the bilayer. The short motif at 51–57 (RLLAYSD) is the RxxxFSD motif 1 element. Residues 73 to 93 (HTKIQEDEELKQSIQALLTTK) lie on the Lumenal side of the membrane. A short helix H1-1 region spans residues 74–79 (TKIQED). A short helix H2-1 region spans residues 81 to 87 (ELKQSIQ). A helical transmembrane segment spans residues 94–116 (IAVYLMTFLIVTVAWAAHIRLFQ). Topologically, residues 117–122 (VIERID) are cytoplasmic. A helical transmembrane segment spans residues 123 to 144 (DTLALLNLACMMLITFLPYTFS). The Lumenal portion of the chain corresponds to 145-154 (LMATFPNNIL). The chain crosses the membrane as a helical span at residues 155–176 (GILLFCACVMVIGLIQALIVLY). Topologically, residues 177-200 (GFSHPFLLNDQIQMSENQAYYKQH) are cytoplasmic. The next 2 helical transmembrane spans lie at 201–221 (ILKV…FSFI) and 222–242 (FFQL…ISQC). Over 243–274 (LKWIRSKAIGGQTDESPDSMPFYTYHPSEPLS) the chain is Cytoplasmic. Residues 275–299 (KERVEAFSDGVFAIVATLLILDICE) form a helical membrane-spanning segment. Residues 277-283 (RVEAFSD) carry the RxxxFSD motif 2 motif. Residues 300–326 (GNVPDPSVVKKKFDNSLIAALQEYGPE) lie on the Lumenal side of the membrane. The tract at residues 305–313 (PSVVKKKFD) is short helix H1-2. The tract at residues 315-321 (SLIAALQ) is short helix H2-2. A helical membrane pass occupies residues 327 to 349 (YLAYFGSFVTVGLLWFVHHSLFL). The Cytoplasmic portion of the chain corresponds to 350-355 (HVTKAT). A helical transmembrane segment spans residues 356–377 (RLMGLFNTFSLAFVGGLPLAYQ). The Lumenal portion of the chain corresponds to 378 to 392 (LTHESPRGSRNELEA). A helical membrane pass occupies residues 393–413 (VQISCVIIFFASLFQLAIWVT). At 414-433 (ALFTERETLHPYVRYGGREH) the chain is on the cytoplasmic side. The chain crosses the membrane as a helical span at residues 434 to 457 (TFMLAKLSLYPCVALGTFFITCIL). The Lumenal segment spans residues 458–459 (SR). Residues 460–486 (FSAPIFHMMEICIPFAFLLLRLLVRVA) traverse the membrane as a helical segment. Topologically, residues 487–520 (LALLRWLFCSARNDLERIPVEEEESRLPINDIVT) are cytoplasmic.

Belongs to the TMEM175 family. As to quaternary structure, homodimer.

Its subcellular location is the endosome membrane. It is found in the lysosome membrane. It carries out the reaction H(+)(in) = H(+)(out). The enzyme catalyses K(+)(in) = K(+)(out). Its activity is regulated as follows. Active at low pH (under pH 4.6): proton channel activity is activated by luminal side protons. Polyunsaturated fatty acids, such as arachidonic acid, also activate the channel activity. In terms of biological role, proton-activated proton channel that catalyzes proton efflux from endosomes and lysosomes to maintain a steady-state pH. Activated at low pH (under pH 4.6) by luminal side protons: selectively mediates lysosomal proton release from lysosomes, eliciting a proton leak that balances V-ATPase activity to maintain pH homeostasis. Regulation of lumenal pH stability is required for autophagosome-lysosome fusion. Also acts as a potassium channel at higher pH, regulating potassium conductance in endosomes and lysosomes. This is Endosomal/lysosomal proton channel TMEM175 from Danio rerio (Zebrafish).